An 873-amino-acid polypeptide reads, in one-letter code: Sine oculis-binding protein homolog (873 aa).

The span at 1–14 (MAEMEKEGRPPENK) shows a compositional bias: basic and acidic residues. The tract at residues 1-26 (MAEMEKEGRPPENKRSRKPAHPVKRE) is disordered. 2 consecutive FCS-type zinc fingers follow at residues 142–180 (DDVSNVQIMCAWCQKVGIKRYSLSMGSEVKCFCSEKCFA) and 216–256 (FKNN…KCLN). Disordered stretches follow at residues 307-338 (ARRKAPSPASAAGQIQGPGPSASTTASPSDTA), 413-485 (RGPP…GAPL), 550-608 (KPPS…NQAQ), 742-766 (STEGSKNPEPPQDPKKPQPPEELAV), and 779-811 (SNCHLEGDTGKKAGEEPLAGGDKQDPNLNNPAD). Positions 312–338 (PSPASAAGQIQGPGPSASTTASPSDTA) are enriched in low complexity. Positions 460-485 (IHPPTTPTMPGNPPGLLPPPPPGAPL) are enriched in pro residues. Residues 554 to 570 (GFSSNGENFIPSNSSET) are compositionally biased toward polar residues. Positions 571–603 (PGGKPPNSSSSPRESKQGSSKPSDSSPSCSGQS) are enriched in low complexity. Residues 783–793 (LEGDTGKKAGE) show a composition bias toward basic and acidic residues.

It belongs to the SOBP family.

Functionally, implicated in development of the cochlea. This chain is Sine oculis-binding protein homolog, found in Gallus gallus (Chicken).